Consider the following 133-residue polypeptide: Small ribosomal subunit protein uS9 (133 aa).

The interval serine 94–arginine 133 is disordered. Over residues alanine 95 to alanine 113 the composition is skewed to basic and acidic residues. The segment covering lysine 114–arginine 133 has biased composition (basic residues).

Belongs to the universal ribosomal protein uS9 family.

The chain is Small ribosomal subunit protein uS9 from Synechococcus sp. (strain CC9605).